The following is a 314-amino-acid chain: Electron transfer flavoprotein subunit alpha (314 aa).

253–281 (LYVAVGISGAIQHLAGMKDSKVIVAINKD) provides a ligand contact to FAD.

It belongs to the ETF alpha-subunit/FixB family. Heterodimer of an alpha and a beta subunit. Requires FAD as cofactor.

In terms of biological role, the electron transfer flavoprotein serves as a specific electron acceptor for other dehydrogenases. It transfers the electrons to the main respiratory chain via ETF-ubiquinone oxidoreductase (ETF dehydrogenase). In Bradyrhizobium diazoefficiens (strain JCM 10833 / BCRC 13528 / IAM 13628 / NBRC 14792 / USDA 110), this protein is Electron transfer flavoprotein subunit alpha (etfA).